The following is a 377-amino-acid chain: Chaperone protein DnaJ (377 aa).

Positions 5–70 constitute a J domain; sequence DYYEVLGVAK…QKRAAYDRYG (66 aa). Residues 137–215 form a CR-type zinc finger; it reads GFDTEIRVPS…CDGVGRTRRN (79 aa). The Zn(2+) site is built by Cys-150, Cys-153, Cys-167, Cys-170, Cys-189, Cys-192, Cys-203, and Cys-206. 4 CXXCXGXG motif repeats span residues 150-157, 167-174, 189-196, and 203-210; these read CDTCHGSG, CRTCGGSG, CPTCHGTG, and CPSCDGVG.

Belongs to the DnaJ family. In terms of assembly, homodimer. It depends on Zn(2+) as a cofactor.

It is found in the cytoplasm. Functionally, participates actively in the response to hyperosmotic and heat shock by preventing the aggregation of stress-denatured proteins and by disaggregating proteins, also in an autonomous, DnaK-independent fashion. Unfolded proteins bind initially to DnaJ; upon interaction with the DnaJ-bound protein, DnaK hydrolyzes its bound ATP, resulting in the formation of a stable complex. GrpE releases ADP from DnaK; ATP binding to DnaK triggers the release of the substrate protein, thus completing the reaction cycle. Several rounds of ATP-dependent interactions between DnaJ, DnaK and GrpE are required for fully efficient folding. Also involved, together with DnaK and GrpE, in the DNA replication of plasmids through activation of initiation proteins. The chain is Chaperone protein DnaJ from Bordetella parapertussis (strain 12822 / ATCC BAA-587 / NCTC 13253).